The primary structure comprises 89 residues: Small ribosomal subunit protein uS15 (89 aa).

This sequence belongs to the universal ribosomal protein uS15 family. In terms of assembly, part of the 30S ribosomal subunit. Forms a bridge to the 50S subunit in the 70S ribosome, contacting the 23S rRNA.

Functionally, one of the primary rRNA binding proteins, it binds directly to 16S rRNA where it helps nucleate assembly of the platform of the 30S subunit by binding and bridging several RNA helices of the 16S rRNA. Its function is as follows. Forms an intersubunit bridge (bridge B4) with the 23S rRNA of the 50S subunit in the ribosome. This Clavibacter michiganensis subsp. michiganensis (strain NCPPB 382) protein is Small ribosomal subunit protein uS15.